Here is a 243-residue protein sequence, read N- to C-terminus: MGWFKYMYKRILLKLSGEGLANKEKNLAIDYKLVEDIAKQLKEVVKKGIEVAIVVGGGNFWRGTSAEKNGIPRNRADYIGMLATVMNGLALKSGFEKEGLVARVYSSLNLDPKVAENYINEKATKNLENNEIVIFAGGTGRPYFTTDTAATLFASEIGADAIIMGKNGVNGVYSDDPKKNKDAKKFDTITYDEVLNMNLQIMDLTAISMAKENKIELIVFDITEKNSIYNSILGKINHTKVVN.

14–17 (KLSG) provides a ligand contact to ATP. Gly57 serves as a coordination point for UMP. Positions 58 and 62 each coordinate ATP. UMP contacts are provided by residues Asp77 and 139 to 146 (TGRPYFTT). The ATP site is built by Asn167, Tyr173, and Asp176.

Belongs to the UMP kinase family. Homohexamer.

Its subcellular location is the cytoplasm. The enzyme catalyses UMP + ATP = UDP + ADP. It functions in the pathway pyrimidine metabolism; CTP biosynthesis via de novo pathway; UDP from UMP (UMPK route): step 1/1. Its activity is regulated as follows. Inhibited by UTP. Catalyzes the reversible phosphorylation of UMP to UDP. This chain is Uridylate kinase, found in Mycoplasmopsis pulmonis (strain UAB CTIP) (Mycoplasma pulmonis).